A 216-amino-acid chain; its full sequence is Protein-L-isoaspartate O-methyltransferase (216 aa).

S61 is an active-site residue.

Belongs to the methyltransferase superfamily. L-isoaspartyl/D-aspartyl protein methyltransferase family.

It localises to the cytoplasm. The catalysed reaction is [protein]-L-isoaspartate + S-adenosyl-L-methionine = [protein]-L-isoaspartate alpha-methyl ester + S-adenosyl-L-homocysteine. Catalyzes the methyl esterification of L-isoaspartyl residues in peptides and proteins that result from spontaneous decomposition of normal L-aspartyl and L-asparaginyl residues. It plays a role in the repair and/or degradation of damaged proteins. This is Protein-L-isoaspartate O-methyltransferase from Dinoroseobacter shibae (strain DSM 16493 / NCIMB 14021 / DFL 12).